Reading from the N-terminus, the 287-residue chain is MANIVNFTDKQFENRLNDNLEELIQGKKAVESPTAFLLGGQPGSGKTSLRSAIFEETQGNVIVIDNDTFKQQHPNFDELVKLYEKDVVKHVTPYSNRMTEAIISRLSDQGYNLVIEGTGRTTDVPIQTATMLQAKGYETKMYVMAVPKINSYLGTIERYETMYADDPMTARATPKQAHDIVVKNLPTNLETLHKTGLFSDIRLYNREGVKLYSSLETPSISPKETLEKELNRKVSGKEIQPTLERIEQKMVLNKHQETPEFKAIQQKLESLQPPTPPIPKTPKLPGI.

40–47 (GQPGSGKT) contributes to the ATP binding site. Asn66 provides a ligand contact to substrate. Asp67 acts as the Proton acceptor in catalysis. Substrate contacts are provided by Glu100, Thr118, Arg120, and Thr128. A disordered region spans residues 267 to 287 (KLESLQPPTPPIPKTPKLPGI). A compositionally biased stretch (pro residues) spans 273–287 (PPTPPIPKTPKLPGI).

This sequence belongs to the zeta toxin family. In the presence of the epsilon antitoxin forms an inactive PezA(2)PezT(2) heterotetramer. The heterotetramer is still able to bind the UNAG substrate.

It catalyses the reaction UDP-N-acetyl-alpha-D-glucosamine + ATP = UDP-N-acetyl-alpha-D-glucosamine 3'-phosphate + ADP + H(+). Functionally, toxic component of a type II toxin-antitoxin (TA) system. Phosphorylates UDP-N-acetyl-D-glucosamine (UNAG) on the 3'-hydroxyl group of the N-acetyl-D-glucosamine moiety, yielding UNAG-3P. UNAG-3P inhibits MurA, the first committed step in cell wall synthesis, which is then blocked. Phosphorylation is inhibited by cognate epsilon antitoxin. Part of a postsegregational killing (PSK) system involved in the killing of plasmid-free cells. The zeta toxin induces programmed cell death. The chain is Toxin zeta from Streptococcus pyogenes.